The chain runs to 114 residues: TYRO protein tyrosine kinase-binding protein (114 aa).

The N-terminal stretch at 1–21 is a signal peptide; that stretch reads MGALEPSWCLLFLPVLLTVGG. Residues 22–42 lie on the Extracellular side of the membrane; it reads LSPVQAQSDTFPRCDCSSVSP. The chain crosses the membrane as a helical span at residues 43-63; the sequence is GVLAGIVLGDLVLTLLIALAV. Ca(2+) is bound at residue D52. The Cytoplasmic segment spans residues 64-114; the sequence is YSLGRLVSRGQGTAEGTRKQHIAETESPYQELQGQRPEVYSDLNTQRQYYR. A disordered region spans residues 74 to 107; the sequence is QGTAEGTRKQHIAETESPYQELQGQRPEVYSDLN. Residues 81–109 form the ITAM domain; sequence RKQHIAETESPYQELQGQRPEVYSDLNTQ. 2 positions are modified to phosphotyrosine: Y92 and Y103.

It belongs to the TYROBP family. Homodimer; disulfide-linked. Homotrimer; disulfide-linked. Homotetramer; disulfide-linked. Homotrimers and homotetramers form when low levels of partner receptors are available and are competitive with assembly with interacting receptors. They may represent alternative oligomerization states or may be intermediates in the receptor assembly process. Binding of a metal cation aids in homooligomerization through coordination of the metal ion by the subunits of the oligomer. Interacts with TREM1. Interacts with TREM2. Interacts with TREM3. Interacts with CLECSF5. Interacts with CD300LB and CD300C2. Interacts with CD300E. Interacts (via ITAM domain) with SYK (via SH2 domains); activates SYK mediating neutrophil and macrophage integrin-mediated activation. Interacts (via transmembrane domain) with KLRK1 isoform 2 (via transmembrane domain); the interaction is required for KLRK1 NK cell surface expression and NK cell-mediated cytotoxicity. Interacts with KLRC2. Interacts with CD300H. Interacts with KLRD1. Interacts with KLRA4 and KLRA8. Post-translationally, tyrosine phosphorylated. Following ligand binding by associated receptors, tyrosine phosphorylated in the ITAM domain which leads to activation of additional tyrosine kinases and subsequent cell activation. In terms of tissue distribution, expressed on microglia (at protein level). Expressed on oligodendrocytes (at protein level). Expressed on macrophages and osteoclasts. Expressed on dendritic cells in liver, spleen, kidney and lung with highest levels in liver dendritic cells.

The protein resides in the cell membrane. In terms of biological role, adapter protein which non-covalently associates with activating receptors found on the surface of a variety of immune cells to mediate signaling and cell activation following ligand binding by the receptors. TYROBP is tyrosine-phosphorylated in the ITAM domain following ligand binding by the associated receptors which leads to activation of additional tyrosine kinases and subsequent cell activation. Also has an inhibitory role in some cells. Non-covalently associates with activating receptors of the CD300 family to mediate cell activation. Also mediates cell activation through association with activating receptors of the CD200R family. Required for neutrophil activation mediated by integrin. Required for the activation of myeloid cells mediated by the CLEC5A/MDL1 receptor. Associates with natural killer (NK) cell receptors such as the KLRD1/KLRC2 heterodimer to mediate NK cell activation. Also associates non-covalently with the NK cell receptors KLRA4/LY49D and KLRA8/LY49H which leads to NK cell activation. Associates with TREM1 to mediate activation of neutrophils and monocytes. Associates with TREM2 on monocyte-derived dendritic cells to mediate up-regulation of chemokine receptor CCR7 and dendritic cell maturation and survival. Association with TREM2 mediates cytokine-induced formation of multinucleated giant cells which are formed by the fusion of macrophages. Stabilizes the TREM2 C-terminal fragment (TREM2-CTF) which is produced by TREM2 ectodomain shedding. In microglia, required with TREM2 for phagocytosis of apoptotic neurons. Required with ITGAM/CD11B in microglia to control production of microglial superoxide ions which promote the neuronal apoptosis that occurs during brain development. Promotes pro-inflammatory responses in microglia following nerve injury which accelerates degeneration of injured neurons. Positively regulates the expression of the IRAK3/IRAK-M kinase and IL10 production by liver dendritic cells and inhibits their T cell allostimulatory ability. Negatively regulates B cell proliferation. Required for CSF1-mediated osteoclast cytoskeletal organization. Positively regulates multinucleation during osteoclast development. In Mus musculus (Mouse), this protein is TYRO protein tyrosine kinase-binding protein.